The chain runs to 363 residues: Phosphoribosylformylglycinamidine cyclo-ligase (363 aa).

The protein belongs to the AIR synthase family.

It is found in the cytoplasm. It catalyses the reaction 2-formamido-N(1)-(5-O-phospho-beta-D-ribosyl)acetamidine + ATP = 5-amino-1-(5-phospho-beta-D-ribosyl)imidazole + ADP + phosphate + H(+). It functions in the pathway purine metabolism; IMP biosynthesis via de novo pathway; 5-amino-1-(5-phospho-D-ribosyl)imidazole from N(2)-formyl-N(1)-(5-phospho-D-ribosyl)glycinamide: step 2/2. The protein is Phosphoribosylformylglycinamidine cyclo-ligase of Brucella anthropi (strain ATCC 49188 / DSM 6882 / CCUG 24695 / JCM 21032 / LMG 3331 / NBRC 15819 / NCTC 12168 / Alc 37) (Ochrobactrum anthropi).